The primary structure comprises 416 residues: tRNA(Met) cytidine acetate ligase (416 aa).

ATP contacts are provided by residues 7–20 (VVEY…HLHH), Gly-101, Asn-162, and 187–188 (RI).

This sequence belongs to the TmcAL family.

The protein resides in the cytoplasm. It carries out the reaction cytidine(34) in elongator tRNA(Met) + acetate + ATP = N(4)-acetylcytidine(34) in elongator tRNA(Met) + AMP + diphosphate. Functionally, catalyzes the formation of N(4)-acetylcytidine (ac(4)C) at the wobble position of elongator tRNA(Met), using acetate and ATP as substrates. First activates an acetate ion to form acetyladenylate (Ac-AMP) and then transfers the acetyl group to tRNA to form ac(4)C34. In Halalkalibacterium halodurans (strain ATCC BAA-125 / DSM 18197 / FERM 7344 / JCM 9153 / C-125) (Bacillus halodurans), this protein is tRNA(Met) cytidine acetate ligase.